A 329-amino-acid polypeptide reads, in one-letter code: Delta-aminolevulinic acid dehydratase (329 aa).

The active-site Schiff-base intermediate with substrate is Lys202. 5-aminolevulinate is bound by residues Arg212 and Arg223. Residue Glu239 coordinates Mg(2+). Lys254 serves as the catalytic Schiff-base intermediate with substrate. Residues Ser280 and Tyr319 each contribute to the 5-aminolevulinate site.

The protein belongs to the ALAD family. Homooctamer.

The catalysed reaction is 2 5-aminolevulinate = porphobilinogen + 2 H2O + H(+). It functions in the pathway porphyrin-containing compound metabolism; protoporphyrin-IX biosynthesis; coproporphyrinogen-III from 5-aminolevulinate: step 1/4. Its function is as follows. Catalyzes an early step in the biosynthesis of tetrapyrroles. Binds two molecules of 5-aminolevulinate per subunit, each at a distinct site, and catalyzes their condensation to form porphobilinogen. This chain is Delta-aminolevulinic acid dehydratase (hemB), found in Mycobacterium leprae (strain TN).